Reading from the N-terminus, the 180-residue chain is NAD(P)H-quinone oxidoreductase subunit I, chloroplastic (180 aa).

4Fe-4S ferredoxin-type domains lie at 55–84 (GRIH…VDWR) and 95–124 (LNYS…MTEE). Residues Cys64, Cys67, Cys70, Cys74, Cys104, Cys107, Cys110, and Cys114 each contribute to the [4Fe-4S] cluster site.

This sequence belongs to the complex I 23 kDa subunit family. In terms of assembly, NDH is composed of at least 16 different subunits, 5 of which are encoded in the nucleus. [4Fe-4S] cluster is required as a cofactor.

It localises to the plastid. Its subcellular location is the chloroplast thylakoid membrane. It carries out the reaction a plastoquinone + NADH + (n+1) H(+)(in) = a plastoquinol + NAD(+) + n H(+)(out). The catalysed reaction is a plastoquinone + NADPH + (n+1) H(+)(in) = a plastoquinol + NADP(+) + n H(+)(out). In terms of biological role, NDH shuttles electrons from NAD(P)H:plastoquinone, via FMN and iron-sulfur (Fe-S) centers, to quinones in the photosynthetic chain and possibly in a chloroplast respiratory chain. The immediate electron acceptor for the enzyme in this species is believed to be plastoquinone. Couples the redox reaction to proton translocation, and thus conserves the redox energy in a proton gradient. The sequence is that of NAD(P)H-quinone oxidoreductase subunit I, chloroplastic from Zea mays (Maize).